Here is a 260-residue protein sequence, read N- to C-terminus: Movement protein (260 aa).

Positions 230-260 (SGDTAEEAGEASSGEPHWVPEATAPRVRKAT) are disordered.

Its function is as follows. Transports viral genome to neighboring plant cells directly through plasmosdesmata, without any budding. The movement protein allows efficient cell to cell propagation, by bypassing the host cell wall barrier. Might act by forming tubules structures that increase the size exclusion limit (SEL) of plasmodesmata, thereby allowing viral ribonucleoproteins to spread directly to neighboring cells. Binds to ssRNA. This chain is Movement protein, found in Groundnut rosette virus (strain MC1) (GRV).